We begin with the raw amino-acid sequence, 141 residues long: Cystatin (141 aa).

The N-terminal stretch at 1 to 26 (MVHSQLPVAAPLRLLCALLLLPSATM) is a signal peptide. The Cystatin domain occupies 29 to 129 (GGLSPRSVTD…CHFQVWSRPW (101 aa)). The Secondary area of contact signature appears at 73–77 (QVVAG). Disulfide bonds link cysteine 91/cysteine 107 and cysteine 120/cysteine 140.

It belongs to the cystatin family. As to expression, expressed at a low level by the venom gland (at protein level).

The protein localises to the secreted. Functionally, inhibits various C1 cysteine proteases including cathepsin L, papain and cathepsin B. This protein has no toxic activity and its function in the venom is unknown. It may play a role as a housekeeping or regulatory protein. This Pseudonaja textilis (Eastern brown snake) protein is Cystatin.